The following is a 152-amino-acid chain: UPF0178 protein SAS0646 (152 aa).

Belongs to the UPF0178 family.

This Staphylococcus aureus (strain MSSA476) protein is UPF0178 protein SAS0646.